Here is a 261-residue protein sequence, read N- to C-terminus: Putative hydro-lyase SAR11_0660 (261 aa).

Belongs to the D-glutamate cyclase family.

The polypeptide is Putative hydro-lyase SAR11_0660 (Pelagibacter ubique (strain HTCC1062)).